A 146-amino-acid polypeptide reads, in one-letter code: Large ribosomal subunit protein eL28 (146 aa).

The tract at residues 123–146 (VRAARKERSSKITFQRKAVRPKRH) is disordered.

Belongs to the eukaryotic ribosomal protein eL28 family.

The sequence is that of Large ribosomal subunit protein eL28 from Trypanosoma cruzi.